The sequence spans 425 residues: Gamma-glutamyl phosphate reductase (425 aa).

Belongs to the gamma-glutamyl phosphate reductase family.

It is found in the cytoplasm. The catalysed reaction is L-glutamate 5-semialdehyde + phosphate + NADP(+) = L-glutamyl 5-phosphate + NADPH + H(+). It functions in the pathway amino-acid biosynthesis; L-proline biosynthesis; L-glutamate 5-semialdehyde from L-glutamate: step 2/2. Its function is as follows. Catalyzes the NADPH-dependent reduction of L-glutamate 5-phosphate into L-glutamate 5-semialdehyde and phosphate. The product spontaneously undergoes cyclization to form 1-pyrroline-5-carboxylate. The chain is Gamma-glutamyl phosphate reductase from Xylella fastidiosa (strain M23).